A 351-amino-acid polypeptide reads, in one-letter code: Translation initiation factor eIF2B subunit beta (351 aa).

It belongs to the eIF-2B alpha/beta/delta subunits family. Component of the translation initiation factor 2B (eIF2B) complex which is a heterodecamer of two sets of five different subunits: alpha, beta, gamma, delta and epsilon. Subunits alpha, beta and delta comprise a regulatory subcomplex and subunits epsilon and gamma comprise a catalytic subcomplex. Within the complex, the hexameric regulatory complex resides at the center, with the two heterodimeric catalytic subcomplexes bound on opposite sides.

The protein resides in the cytoplasm. It localises to the cytosol. Activated by the chemical integrated stress response (ISR) inhibitor ISRIB which stimulates guanine nucleotide exchange factor activity for both phosphorylated and unphosphorylated eIF2. Functionally, acts as a component of the translation initiation factor 2B (eIF2B) complex, which catalyzes the exchange of GDP for GTP on eukaryotic initiation factor 2 (eIF2) gamma subunit. Its guanine nucleotide exchange factor activity is repressed when bound to eIF2 complex phosphorylated on the alpha subunit, thereby limiting the amount of methionyl-initiator methionine tRNA available to the ribosome and consequently global translation is repressed. In Bos taurus (Bovine), this protein is Translation initiation factor eIF2B subunit beta (EIF2B2).